Here is a 732-residue protein sequence, read N- to C-terminus: Catalase-peroxidase (732 aa).

Residues methionine 1 to asparagine 20 form a disordered region. The segment at residues tryptophan 92–tyrosine 220 is a cross-link (tryptophyl-tyrosyl-methioninium (Trp-Tyr) (with M-246)). Histidine 93 serves as the catalytic Proton acceptor. Positions tyrosine 220–methionine 246 form a cross-link, tryptophyl-tyrosyl-methioninium (Tyr-Met) (with W-92). Position 261 (histidine 261) interacts with heme b.

It belongs to the peroxidase family. Peroxidase/catalase subfamily. In terms of assembly, homodimer or homotetramer. Heme b serves as cofactor. In terms of processing, formation of the three residue Trp-Tyr-Met cross-link is important for the catalase, but not the peroxidase activity of the enzyme.

It catalyses the reaction H2O2 + AH2 = A + 2 H2O. The catalysed reaction is 2 H2O2 = O2 + 2 H2O. In terms of biological role, bifunctional enzyme with both catalase and broad-spectrum peroxidase activity. The chain is Catalase-peroxidase from Desulfosudis oleivorans (strain DSM 6200 / JCM 39069 / Hxd3) (Desulfococcus oleovorans).